Here is a 306-residue protein sequence, read N- to C-terminus: LysM and putative peptidoglycan-binding domain-containing protein 3 (306 aa).

Over 1-217 (MAGRHQNRSF…PYYGADWGIG (217 aa)) the chain is Extracellular. Asn-7 is a glycosylation site (N-linked (GlcNAc...) asparagine). The residue at position 55 (Ser-55) is a Phosphoserine. The region spanning 65–109 (LTKDIQEGDTLNAIALQYCCTVADIKRVNNLISDQDFFALRSIKI) is the LysM domain. Residues 218 to 238 (WWTAVVIMLIVGIITPVFYLL) traverse the membrane as a helical segment. The Cytoplasmic segment spans residues 239–306 (YYEILAKVDV…SQSPAAQQET (68 aa)).

The protein localises to the cell membrane. It localises to the golgi apparatus. Essential for Golgi structural integrity. The chain is LysM and putative peptidoglycan-binding domain-containing protein 3 (LYSMD3) from Homo sapiens (Human).